A 270-amino-acid chain; its full sequence is Thymidine kinase 2, mitochondrial (270 aa).

The transit peptide at 1 to 38 (MLLRSLRSWAARSPRSVGPGSSGSPGSLDSGAGPLWAP) directs the protein to the mitochondrion. Positions 1-54 (MLLRSLRSWAARSPRSVGPGSSGSPGSLDSGAGPLWAPRRAWPPDKDRENDKEK) are disordered. Low complexity predominate over residues 13-34 (SPRSVGPGSSGSPGSLDSGAGP). A compositionally biased stretch (basic and acidic residues) spans 42-54 (WPPDKDRENDKEK). Position 62 to 70 (62 to 70 (GNIASGKTT)) interacts with ATP. E138 acts as the Proton acceptor in catalysis.

The protein belongs to the DCK/DGK family. Homodimer. Found in most tissues; highly expressed in liver.

The protein localises to the mitochondrion. The catalysed reaction is thymidine + ATP = dTMP + ADP + H(+). It catalyses the reaction 2'-deoxycytidine + ATP = dCMP + ADP + H(+). The enzyme catalyses 2'-deoxyuridine + ATP = dUMP + ADP + H(+). Functionally, phosphorylates thymidine, deoxycytidine, and deoxyuridine in the mitochondrial matrix. In non-replicating cells, where cytosolic dNTP synthesis is down-regulated, mtDNA synthesis depends solely on TK2 and DGUOK. This chain is Thymidine kinase 2, mitochondrial (Tk2), found in Mus musculus (Mouse).